We begin with the raw amino-acid sequence, 46 residues long: Viscotoxin-C1 (46 aa).

3 disulfide bridges follow: C3-C40, C4-C32, and C16-C26.

Monomer.

The protein resides in the secreted. In terms of biological role, thionins are small plant proteins which are toxic to animal cells. They seem to exert their toxic effect at the level of the cell membrane. Their precise function is not known. The polypeptide is Viscotoxin-C1 (Viscum album (European mistletoe)).